Here is a 268-residue protein sequence, read N- to C-terminus: MAAFADLDLRAGSDLKALRGLVETAAHLGYSVVAINHIVDFKEKKREIEKPIAVSELFTTLPIVQGKSRPIKILTRLTIIVTDPAHCNVLRATSSRVRLYDIVAVFPKTEKLFHVACTHLDVDLVCITVTEKLPFYFKRPPVNVAIERGLGFELVYGPAIRDATMRRYTISNALNLMQICKGKNVILSSAAERPLEIRGPYDVANLGLLFGLSENDGKAAVSTNCRAVFLHGETRKTAFGIISTVKKPRPSEADDESLPVCKKAKCEG.

N-acetylalanine is present on A2. S251 is subject to Phosphoserine.

This sequence belongs to the eukaryotic/archaeal RNase P protein component 3 family. In terms of assembly, component of nuclear RNase P and RNase MRP ribonucleoproteins. RNase P consists of a catalytic RNA moiety and about 10 protein subunits; POP1, POP4, POP5, POP7, RPP14, RPP21, RPP25, RPP30, RPP38 and RPP40. Within the RNase P complex, POP1, POP7 and RPP25 form the 'finger' subcomplex, POP5, RPP14, RPP40 and homodimeric RPP30 form the 'palm' subcomplex, and RPP21, POP4 and RPP38 form the 'wrist' subcomplex. All subunits of the RNase P complex interact with the catalytic RNA. Several subunits of RNase P are also part of the RNase MRP complex. RNase MRP consists of a catalytic RNA moiety and about 8 protein subunits; POP1, POP7, RPP25, RPP30, RPP38, RPP40 and possibly also POP4 and POP5.

The protein resides in the nucleus. Its subcellular location is the nucleolus. Its function is as follows. Component of ribonuclease P, a ribonucleoprotein complex that generates mature tRNA molecules by cleaving their 5'-ends. Also a component of the MRP ribonuclease complex, which cleaves pre-rRNA sequences. This chain is Ribonuclease P protein subunit p30 (Rpp30), found in Mus musculus (Mouse).